A 214-amino-acid polypeptide reads, in one-letter code: Transcriptional activator protein ExaE (214 aa).

Residues 2–118 form the Response regulatory domain; that stretch reads GILLVDDHPM…VVLEAVRRVL (117 aa). At D53 the chain carries 4-aspartylphosphate. The region spanning 143–208 is the HTH luxR-type domain; it reads GNARLQGLTQ…ELVHLAIEAG (66 aa). A DNA-binding region (H-T-H motif) is located at residues 167–186; it reads TRLIAQQLCISAKTVSNYLT.

In terms of biological role, positive regulator of the expression of the gene qedA and the activity of ADH I but does not affect the activities of ADH IIB or ADH IIG. The protein is Transcriptional activator protein ExaE of Pseudomonas putida (Arthrobacter siderocapsulatus).